Consider the following 277-residue polypeptide: UPF0276 protein PSEEN3355 (277 aa).

It belongs to the UPF0276 family.

This is UPF0276 protein PSEEN3355 from Pseudomonas entomophila (strain L48).